The sequence spans 307 residues: HTH-type transcriptional regulator DmlR (307 aa).

The 58-residue stretch at 5–62 (PLLNDLRVFMLVARRAGFAAVAEELGVSPAFVSKRIALLEQTLNVVLLHRTTRRVTIT) folds into the HTH lysR-type domain. Residues 22–41 (FAAVAEELGVSPAFVSKRIA) constitute a DNA-binding region (H-T-H motif).

This sequence belongs to the LysR transcriptional regulatory family.

Transcriptional regulator required for the aerobic growth on D-malate as the sole carbon source. Induces the expression of dmlA in response to D-malate or L- or meso-tartrate. Negatively regulates its own expression. This Escherichia coli (strain K12) protein is HTH-type transcriptional regulator DmlR (dmlR).